Here is a 253-residue protein sequence, read N- to C-terminus: tRNA1(Val) (adenine(37)-N6)-methyltransferase (253 aa).

This sequence belongs to the methyltransferase superfamily. tRNA (adenine-N(6)-)-methyltransferase family.

Its subcellular location is the cytoplasm. The enzyme catalyses adenosine(37) in tRNA1(Val) + S-adenosyl-L-methionine = N(6)-methyladenosine(37) in tRNA1(Val) + S-adenosyl-L-homocysteine + H(+). Specifically methylates the adenine in position 37 of tRNA(1)(Val) (anticodon cmo5UAC). This chain is tRNA1(Val) (adenine(37)-N6)-methyltransferase, found in Dickeya chrysanthemi (strain Ech1591) (Dickeya zeae (strain Ech1591)).